The primary structure comprises 130 residues: Histone H2A type 1-F (130 aa).

The tract at residues 1 to 22 (MSGRGKQGGKARAKAKTRSSRA) is disordered. S2 is modified (phosphoserine; by RPS6KA5). R4 carries the citrulline; alternate modification. R4 carries the symmetric dimethylarginine; by PRMT5; alternate modification. N6-(2-hydroxyisobutyryl)lysine occurs at positions 6 and 10. A compositionally biased stretch (basic residues) spans 7 to 19 (QGGKARAKAKTRS). The residue at position 10 (K10) is an N6-lactoyllysine; alternate. K37 is modified (N6-(2-hydroxyisobutyryl)lysine; alternate). K37 carries the post-translational modification N6-(beta-hydroxybutyryl)lysine; alternate. N6-crotonyllysine; alternate is present on K37. N6-(2-hydroxyisobutyryl)lysine occurs at positions 75, 76, and 96. N6-glutaryllysine; alternate is present on K96. At Q105 the chain carries N5-methylglutamine. N6-(2-hydroxyisobutyryl)lysine; alternate is present on K119. Residues K119 and K120 each carry the N6-crotonyllysine; alternate modification. N6-glutaryllysine; alternate occurs at positions 119 and 120. Residue K120 forms a Glycyl lysine isopeptide (Lys-Gly) (interchain with G-Cter in ubiquitin); alternate linkage. The residue at position 121 (T121) is a Phosphothreonine; by DCAF1. At K126 the chain carries N6-crotonyllysine; alternate. K126 bears the N6-glutaryllysine; alternate mark.

Belongs to the histone H2A family. The nucleosome is a histone octamer containing two molecules each of H2A, H2B, H3 and H4 assembled in one H3-H4 heterotetramer and two H2A-H2B heterodimers. The octamer wraps approximately 147 bp of DNA. Post-translationally, deiminated on Arg-4 in granulocytes upon calcium entry. In terms of processing, monoubiquitination of Lys-120 (H2AK119Ub) by RING1, TRIM37 and RNF2/RING2 complex gives a specific tag for epigenetic transcriptional repression and participates in X chromosome inactivation of female mammals. It is involved in the initiation of both imprinted and random X inactivation. Ubiquitinated H2A is enriched in inactive X chromosome chromatin. Ubiquitination of H2A functions downstream of methylation of 'Lys-27' of histone H3 (H3K27me). H2AK119Ub by RNF2/RING2 can also be induced by ultraviolet and may be involved in DNA repair. Following DNA double-strand breaks (DSBs), it is ubiquitinated through 'Lys-63' linkage of ubiquitin moieties by the E2 ligase UBE2N and the E3 ligases RNF8 and RNF168, leading to the recruitment of repair proteins to sites of DNA damage. Ubiquitination at Lys-14 and Lys-16 (H2AK13Ub and H2AK15Ub, respectively) in response to DNA damage is initiated by RNF168 that mediates monoubiquitination at these 2 sites, and 'Lys-63'-linked ubiquitin are then conjugated to monoubiquitin; RNF8 is able to extend 'Lys-63'-linked ubiquitin chains in vitro. H2AK119Ub and ionizing radiation-induced 'Lys-63'-linked ubiquitination (H2AK13Ub and H2AK15Ub) are distinct events. Phosphorylation on Ser-2 (H2AS1ph) is enhanced during mitosis. Phosphorylation on Ser-2 by RPS6KA5/MSK1 directly represses transcription. Acetylation of H3 inhibits Ser-2 phosphorylation by RPS6KA5/MSK1. Phosphorylation at Thr-121 (H2AT120ph) by DCAF1 is present in the regulatory region of many tumor suppresor genes and down-regulates their transcription. Post-translationally, symmetric dimethylation on Arg-4 by the PRDM1/PRMT5 complex may play a crucial role in the germ-cell lineage. In terms of processing, glutamine methylation at Gln-105 (H2AQ104me) by FBL is specifically dedicated to polymerase I. It is present at 35S ribosomal DNA locus and impairs binding of the FACT complex. Crotonylation (Kcr) is specifically present in male germ cells and marks testis-specific genes in post-meiotic cells, including X-linked genes that escape sex chromosome inactivation in haploid cells. Crotonylation marks active promoters and enhancers and confers resistance to transcriptional repressors. It is also associated with post-meiotically activated genes on autosomes. Post-translationally, lactylated in macrophages by EP300/P300 by using lactoyl-CoA directly derived from endogenous or exogenous lactate, leading to stimulates gene transcription.

The protein localises to the nucleus. Its subcellular location is the chromosome. Its function is as follows. Core component of nucleosome. Nucleosomes wrap and compact DNA into chromatin, limiting DNA accessibility to the cellular machineries which require DNA as a template. Histones thereby play a central role in transcription regulation, DNA repair, DNA replication and chromosomal stability. DNA accessibility is regulated via a complex set of post-translational modifications of histones, also called histone code, and nucleosome remodeling. This is Histone H2A type 1-F from Rattus norvegicus (Rat).